Reading from the N-terminus, the 623-residue chain is Lethal(3)malignant brain tumor-like protein 4 (623 aa).

A disordered region spans residues 1–44 (MKQPNRKRKLNMDSKERLDQDGRLEQAEEEKKPKDSTTPLSHVP). The span at 10–35 (LNMDSKERLDQDGRLEQAEEEKKPKD) shows a compositional bias: basic and acidic residues. MBT repeat units follow at residues 52–152 (WSWE…LHIP), 160–260 (FVWM…LIAP), and 269–364 (FSWT…LEVP). The CCHHC-type zinc-finger motif lies at 370–414 (LKILPGQAVCPTPGCRGIGHIRGPRYSGHHSAFGCPYSDMNLKKE). Zn(2+) contacts are provided by cysteine 379, cysteine 384, histidine 398, and cysteine 404. Positions 543 to 607 (WTVDEVAEFV…YNSILMFRHS (65 aa)) constitute an SAM domain.

The protein localises to the nucleus. Functionally, putative Polycomb group (PcG) protein. PcG proteins maintain the transcriptionally repressive state of genes, probably via a modification of chromatin, rendering it heritably changed in its expressibility. In Homo sapiens (Human), this protein is Lethal(3)malignant brain tumor-like protein 4 (L3MBTL4).